Reading from the N-terminus, the 1506-residue chain is MAKQGSKEKKGYPELKEVIKATCKIRVGPGKETLTEGNCLWALKTIDFIFEDLKTEPWTITKMYTVWDRLKGLTPEETSKREFASLQATLACIMCSQMGMKPETVQAAKGIISMKEGLQENKEAKGEKVEQLYPNLEKHREVYPIVNLQAGGRSWKAVESVVFQQLQTVAMQHGLVSEDFERQLAYYATTWTSKDILEVLVMMPGNRAQKELIQGKLNEEAERWVRQNPPGPNVLTVDQIMGVGQTNQQASQANMDQARQICLQWVITALRSVRHMSHRPGNPMLVKQKNTESYEDFIARLLEAIDAEPVMDPIKTYLKVTLSYTNASTDCQKQMDRTLGTRVQQATVEEKMQACRDVGSEGFKMQLLAQALRPQGKAGHKGVNQKCYNCGKPGHLARQCRQGIICHHCGKRGHMQKDCRQKKQQGKQQEGATCGAVRAPYVVTEAPPKIEIKVGTRWKKLLVDTGADKTIVTSHDMSGIPKGRIILQGIGGIIEGEKWEQVHLQYKDKMIKGTIVVLATSPVEVLGRDNMRELGIGLIMANLEEKKIPSTRVRLKEGCKGPHIAQWPLTQEKLEGLKEIVDRLEKEGKVGRAPPHWTCNTPIFCIKKKSGKWRMLIDFRELNKQTEDLAEAQLGLPHPGGLQRKKHVTILDIGDAYFTIPLYEPYRQYTCFTMLSPNNLGPCVRYYWKVLPQGWKLSPAVYQFTMQKILRGWIEEHPMIQFGIYMDDIYIGSDLGLEEHRGIVNELASYIAQYGFMLPEDKRQEGYPAKWLGFELHPEKWKFQKHTLPEITEGPITLNKLQKLVGDLVWRQSLIGKSIPNILKLMEGDRALQSERYIESIHVREWEACRQKLKEMEGNYYDEEKDIYGQLDWGNKAIEYIVFQEKGKPLWVNVVHSIKNLSQAQQIIKAAQKLTQEVIIRTGKIPWILLPGREEDWILELQMGNINWMPSFWSCYKGSVRWKKRNVIAEVVPGPTYYTDGGKKNGRGSLGYIASTGEKFRIHEEGTNQQLELRAIEEACKQGPEKMNIVTDSRYAYEFMLRNWDEEVIRNPIQARIMELVHNKEKIGVHWVPGHKGIPQNEEIDRYISEIFLAKEGRGILQKRAEDAGYDLICPQEISIPAGQVKRIAIDLKINLKKDQWAMIGTKSSFANKGVFVQGGIIDSGYQGTIQVVIYNSNNKEVVIPQGRKFAQLILMPLIHEELKPWGETRKTERGEQGFGSTGMYWIENIPLAEEEHNKWHQDAVSLHLEFGIPRTAAEDIVQQCDVCQENKMPSTLRGSNKRGIDHWQVDYTHYEDKIILVWVETNSGLIYAERVKGETGQEFRVQTMKWYAMFAPKSLQSDNGPAFVAESTQLLMKYLGIEHTTGIPWNPQSQALVERTHQTLKNTLEKLIPMFNAFESALAGTLITLNIKRKGGLGTSPMDIFIFNKEQQRIQQQSKSKQEKIRFCYYRTRKRGHPGEWQGPTQVLWGGDGAIVVKDRGTDRYLVIANKDVKFIPPPKEIQKE.

2 CCHC-type zinc fingers span residues 385 to 402 and 404 to 421; these read QKCYNCGKPGHLARQCRQ and IICHHCGKRGHMQKDCRQ. Residues 459–530 form the Peptidase A2 domain; that stretch reads KKLLVDTGAD…SPVEVLGRDN (72 aa). The active-site Protease; shared with dimeric partner is D464. A Reverse transcriptase domain is found at 587-776; the sequence is EGKVGRAPPH…YPAKWLGFEL (190 aa). Mg(2+) is bound by residues D652, D727, D728, D980, E1012, D1032, and D1085. An RNase H type-1 domain is found at 971-1093; it reads VVPGPTYYTD…IDRYISEIFL (123 aa). The Integrase-type zinc-finger motif lies at 1228–1269; sequence ENIPLAEEEHNKWHQDAVSLHLEFGIPRTAAEDIVQQCDVCQ. 4 residues coordinate Zn(2+): H1237, H1241, C1265, and C1268. Positions 1270 to 1430 constitute an Integrase catalytic domain; that stretch reads ENKMPSTLRG…SPMDIFIFNK (161 aa). Mg(2+) contacts are provided by D1291, D1343, and E1379. A DNA-binding region (integrase-type) is located at residues 1447–1499; sequence RFCYYRTRKRGHPGEWQGPTQVLWGGDGAIVVKDRGTDRYLVIANKDVKFIPP.

The protein belongs to the retroviral Pol polyprotein family. Homotetramer; further associates as a homohexadecamer. Requires Mg(2+) as cofactor. Specific enzymatic cleavages by the viral protease yield mature proteins.

The protein localises to the virion. The catalysed reaction is Endonucleolytic cleavage to 5'-phosphomonoester.. The enzyme catalyses 3'-end directed exonucleolytic cleavage of viral RNA-DNA hybrid.. It carries out the reaction dUTP + H2O = dUMP + diphosphate + H(+). It catalyses the reaction DNA(n) + a 2'-deoxyribonucleoside 5'-triphosphate = DNA(n+1) + diphosphate. In terms of biological role, mediates, with Gag polyprotein, the essential events in virion assembly, including binding the plasma membrane, making the protein-protein interactions necessary to create spherical particles, recruiting the viral Env proteins, and packaging the genomic RNA via direct interactions with the RNA packaging sequence. Targets the polyprotein to the plasma membrane. Functionally, forms the core that encapsulates the genomic RNA-nucleocapsid complex in the virion. Its function is as follows. Encapsulates and protects viral dimeric unspliced genomic RNA (gRNA). Binds these RNAs through its zinc fingers. Acts as a nucleic acid chaperone which is involved in rearrangement of nucleic acid secondary structure during gRNA retrotranscription. Also facilitates template switch leading to recombination. In terms of biological role, the aspartyl protease mediates proteolytic cleavages of Gag and Gag-Pol polyproteins during or shortly after the release of the virion from the plasma membrane. Cleavages take place as an ordered, step-wise cascade to yield mature proteins. This process is called maturation. Displays maximal activity during the budding process just prior to particle release from the cell. RT is a multifunctional enzyme that converts the viral dimeric RNA genome into dsDNA in the cytoplasm, shortly after virus entry into the cell. This enzyme displays a DNA polymerase activity that can copy either DNA or RNA templates, and a ribonuclease H (RNase H) activity that cleaves the RNA strand of RNA-DNA heteroduplexes in a partially processive 3' to 5' endonucleasic mode. Conversion of viral genomic RNA into dsDNA requires many steps. A tRNA-Trp binds to the primer-binding site (PBS) situated at the 5' end of the viral RNA. RT uses the 3' end of the tRNA primer to perfom a short round of RNA-dependent minus-strand DNA synthesis. The reading proceeds through the U5 region and ends after the repeated (R) region which is present at both ends of viral RNA. The portion of the RNA-DNA heteroduplex is digested by the RNase H, resulting in a ssDNA product attached to the tRNA primer. This ssDNA/tRNA hybridizes with the identical R region situated at the 3' end of viral RNA. This template exchange, known as minus-strand DNA strong stop transfer, can be either intra- or intermolecular. RT uses the 3' end of this newly synthesized short ssDNA to perfom the RNA-dependent minus-strand DNA synthesis of the whole template. RNase H digests the RNA template except for a polypurine tract (PPT) situated at the 5' end of the genome. It is not clear if both polymerase and RNase H activities are simultaneous. RNase H probably can proceed both in a polymerase-dependent (RNA cut into small fragments by the same RT performing DNA synthesis) and a polymerase-independent mode (cleavage of remaining RNA fragments by free RTs). Secondly, RT performs DNA-directed plus-strand DNA synthesis using the PPT that has not been removed by RNase H as primers. PPT and tRNA primers are then removed by RNase H. The 3' and 5' ssDNA PBS regions hybridize to form a circular dsDNA intermediate. Strand displacement synthesis by RT to the PBS and PPT ends produces a blunt ended, linear dsDNA copy of the viral genome that includes long terminal repeats (LTRs) at both ends. Functionally, catalyzes viral DNA integration into the host chromosome, by performing a series of DNA cutting and joining reactions. This is Gag-Pol polyprotein (pol) from Ovis aries (Sheep).